A 32-amino-acid chain; its full sequence is Calcitonin (32 aa).

The cysteines at positions 1 and 7 are disulfide-linked. P32 carries the post-translational modification Proline amide.

This sequence belongs to the calcitonin family.

It localises to the secreted. Causes a rapid but short-lived drop in the level of calcium and phosphate in blood by promoting the incorporation of those ions in the bones. In Anguilla japonica (Japanese eel), this protein is Calcitonin.